The following is a 635-amino-acid chain: Early transcription factor 70 kDa subunit (635 aa).

Positions 32–185 (RSIIDENKSV…SNIISLMSDE (154 aa)) constitute a Helicase ATP-binding domain. 45 to 52 (HIMGSGKT) is an ATP binding site. The DEXH box motif lies at 135-138 (DEAH). The Helicase C-terminal domain maps to 326–505 (KFKYFITKIE…TLPFDIKKLL (180 aa)).

Belongs to the helicase family. VETF subfamily. In terms of assembly, heterodimer of a 70 kDa and a 82 kDa subunit. Part of the early transcription complex composed of ETF, RAP94, and the DNA-directed RNA polymerase.

The protein localises to the virion. Acts with RNA polymerase to initiate transcription from early gene promoters. Is recruited by the RPO-associated protein of 94 kDa (RAP94) to form the early transcription complex, which also contains the core RNA polymerase. ETF heterodimer binds to early gene promoters. This chain is Early transcription factor 70 kDa subunit (VETFS), found in Oryctolagus cuniculus (Rabbit).